Reading from the N-terminus, the 258-residue chain is Type III pantothenate kinase (258 aa).

6–13 lines the ATP pocket; that stretch reads DVGNSDTV. Residue 108-111 coordinates substrate; it reads GSDR. Catalysis depends on D110, which acts as the Proton acceptor. D130 serves as a coordination point for K(+). T133 is a binding site for ATP. T185 contributes to the substrate binding site.

The protein belongs to the type III pantothenate kinase family. In terms of assembly, homodimer. NH4(+) is required as a cofactor. Requires K(+) as cofactor.

Its subcellular location is the cytoplasm. The enzyme catalyses (R)-pantothenate + ATP = (R)-4'-phosphopantothenate + ADP + H(+). It participates in cofactor biosynthesis; coenzyme A biosynthesis; CoA from (R)-pantothenate: step 1/5. Its function is as follows. Catalyzes the phosphorylation of pantothenate (Pan), the first step in CoA biosynthesis. This chain is Type III pantothenate kinase, found in Thermobifida fusca (strain YX).